A 310-amino-acid chain; its full sequence is ADP-L-glycero-D-manno-heptose-6-epimerase (310 aa).

Residues 10 to 11 (FI), 31 to 32 (DN), Lys38, Lys53, 75 to 79 (EGACS), and Asn92 contribute to the NADP(+) site. The Proton acceptor role is filled by Tyr140. Lys144 serves as a coordination point for NADP(+). Position 169 (Asn169) interacts with substrate. 2 residues coordinate NADP(+): Val170 and Lys178. Lys178 acts as the Proton acceptor in catalysis. Residues Ser180, His187, 201–204 (FEGS), Arg209, and Tyr272 contribute to the substrate site.

Belongs to the NAD(P)-dependent epimerase/dehydratase family. HldD subfamily. As to quaternary structure, homopentamer. NADP(+) is required as a cofactor.

It catalyses the reaction ADP-D-glycero-beta-D-manno-heptose = ADP-L-glycero-beta-D-manno-heptose. Its pathway is nucleotide-sugar biosynthesis; ADP-L-glycero-beta-D-manno-heptose biosynthesis; ADP-L-glycero-beta-D-manno-heptose from D-glycero-beta-D-manno-heptose 7-phosphate: step 4/4. Its function is as follows. Catalyzes the interconversion between ADP-D-glycero-beta-D-manno-heptose and ADP-L-glycero-beta-D-manno-heptose via an epimerization at carbon 6 of the heptose. The sequence is that of ADP-L-glycero-D-manno-heptose-6-epimerase from Salmonella dublin (strain CT_02021853).